The sequence spans 247 residues: Carboxy-S-adenosyl-L-methionine synthase (247 aa).

Residues Tyr39, 64–66 (GCS), 89–90 (DN), 117–118 (DI), Asn132, and Arg199 each bind S-adenosyl-L-methionine.

The protein belongs to the class I-like SAM-binding methyltransferase superfamily. Cx-SAM synthase family. Homodimer.

The enzyme catalyses prephenate + S-adenosyl-L-methionine = carboxy-S-adenosyl-L-methionine + 3-phenylpyruvate + H2O. Catalyzes the conversion of S-adenosyl-L-methionine (SAM) to carboxy-S-adenosyl-L-methionine (Cx-SAM). The chain is Carboxy-S-adenosyl-L-methionine synthase from Cronobacter sakazakii (strain ATCC BAA-894) (Enterobacter sakazakii).